The sequence spans 799 residues: Target of rapamycin complex 1 subunit TCO89 (799 aa).

Positions 18–41 (NASTVSHQSKPFRQFSTRSRAKSN) are disordered. Thr-52 and Thr-82 each carry phosphothreonine. Ser-84, Ser-104, Ser-107, Ser-115, and Ser-144 each carry phosphoserine. Over residues 97 to 126 (NQGKRSASFHSPVHNTLLSPKNSSHSNTGT) the composition is skewed to polar residues. 2 disordered regions span residues 97 to 171 (NQGK…DNIE) and 201 to 284 (LQSP…ADID). A compositionally biased stretch (basic and acidic residues) spans 147-156 (DAQESKKSES). Acidic residues predominate over residues 157–170 (TTDEEVECFSEDNI). Phosphoserine occurs at positions 203 and 215. A compositionally biased stretch (basic and acidic residues) spans 213 to 224 (DKSGTDGKENHR). The segment covering 233–243 (LSSNNYFGESS) has biased composition (polar residues). Basic and acidic residues predominate over residues 244 to 253 (HSIEHQKDGE). The segment covering 254 to 269 (TSPSSIETKLNATSVI) has biased composition (polar residues). Position 290 is a phosphoserine (Ser-290). The segment at 324–391 (AHKSNQKPSH…PDDISSAGTK (68 aa)) is disordered. Positions 332 to 346 (SHSDEQFDQEDHIDA) are enriched in basic and acidic residues. Over residues 348-363 (RSNSSRKSDSSFMSLR) the composition is skewed to low complexity. Phosphoserine is present on Ser-397. Disordered stretches follow at residues 418 to 476 (FENS…QSTF) and 538 to 568 (NKNSAAPASPLSNEHITSSTNSGSDANRQSN). Composition is skewed to polar residues over residues 420–429 (NSSSIQNSLG) and 461–476 (GRSQLGQNIPNSQSTF). Ser-575 bears the Phosphoserine mark. Residues 663-685 (IRKKSHNDAQSIAHSSSDTDHKD) form a disordered region. Position 707 is a phosphoserine (Ser-707).

Belongs to the TORC subunit TCO89 family. In terms of assembly, the target of rapamycin complex 1 (TORC1) is composed of at least KOG1, LST8, TCO89 and either TOR1 (TORC1-A) or TOR2 (TORC1-B). Interacts with PIB2; following activation of PIB2 by glutamine or cysteine. TORC1 binds to and is inhibited by FKBP-rapamycin.

Its subcellular location is the cell membrane. The protein resides in the vacuole membrane. Its function is as follows. Component of TORC1, which regulates multiple cellular processes to control cell growth in response to environmental signals. Nutrient limitation and environmental stress signals cause inactivation of TORC1. Active TORC1 positively controls ribosome biogenesis via control of rRNA, ribosomal protein and tRNA gene expression, and rRNA processing. TORC1 positively controls protein biosynthesis by regulation of mRNA stability, translation initiation factor activity, and high-affinity amino acid permeases that serve to provide amino acids for use by the translation machinery. TORC1 also promotes growth by sequestering a number of nutrient and general stress-responsive transcription factors in the cytoplasm. TORC1 negatively controls macroautophagy, a process to recycle surplus cytoplasmic mass under nutrient starvation conditions. The protein is Target of rapamycin complex 1 subunit TCO89 (TCO89) of Saccharomyces cerevisiae (strain ATCC 204508 / S288c) (Baker's yeast).